A 410-amino-acid chain; its full sequence is LL-diaminopimelate aminotransferase (410 aa).

Substrate is bound by residues tyrosine 15 and glycine 42. Pyridoxal 5'-phosphate contacts are provided by residues tyrosine 72, 108-109 (AK), tyrosine 132, asparagine 188, tyrosine 219, and 247-249 (SFS). Positions 109, 132, and 188 each coordinate substrate. Lysine 250 carries the N6-(pyridoxal phosphate)lysine modification. Positions 258 and 293 each coordinate pyridoxal 5'-phosphate. The substrate site is built by asparagine 293 and arginine 389.

It belongs to the class-I pyridoxal-phosphate-dependent aminotransferase family. LL-diaminopimelate aminotransferase subfamily. In terms of assembly, homodimer. Requires pyridoxal 5'-phosphate as cofactor.

The catalysed reaction is (2S,6S)-2,6-diaminopimelate + 2-oxoglutarate = (S)-2,3,4,5-tetrahydrodipicolinate + L-glutamate + H2O + H(+). Its pathway is amino-acid biosynthesis; L-lysine biosynthesis via DAP pathway; LL-2,6-diaminopimelate from (S)-tetrahydrodipicolinate (aminotransferase route): step 1/1. Functionally, involved in the synthesis of meso-diaminopimelate (m-DAP or DL-DAP), required for both lysine and peptidoglycan biosynthesis. Catalyzes the direct conversion of tetrahydrodipicolinate to LL-diaminopimelate. This chain is LL-diaminopimelate aminotransferase, found in Bacteroides fragilis (strain YCH46).